Consider the following 849-residue polypeptide: BRCT-containing protein 1 (849 aa).

BRCT domains are found at residues 1 to 75 (MLAA…FYSC), 76 to 167 (NPYL…PYLF), and 282 to 370 (PSVG…DFPV). 2 disordered regions span residues 453–519 (QSAD…ASSD) and 606–632 (KKRR…NTNA). Over residues 480–493 (ELQDEGRLEIDAKS) the composition is skewed to basic and acidic residues. 2 BRCT domains span residues 625–715 (SESR…PYLL) and 738–843 (QGPS…RIAD).

Interacts with gammaH2A; binds phosphohistone H2A (gammaH2A) formed by Rad3/ATR checkpoint kinase at DNA lesions. Interacts with Rhp18/Rad18. Interacts with Nse5-Nse6; this allows to tether Smc5-Smc6 at replicative DNA lesions.

It localises to the nucleus. The protein resides in the chromosome. Functionally, required for resumption of chromosome replication after DNA damage, specifically in S phase. Is recruited to chromatin in response to stalled replication forks and acts as a scaffold during DNA repair. Required for the accumulation of the Smc5-Smc6 genome stability complex in foci during replication stress and for activation of the intrinsic SUMO ligase activity of the complex by collapsed replication forks. In pericentromeric heterochromatin, enhances Clr4/Suv39-mediated H3 Lys-9 dimethylation (H3K9me2), required for stabilization of stalled replication forks and accurate chromosome segregation during mitosis. In terms of biological role, required for mitotic fidelity, specifically in the G2 phase of the cell cycle. Plays a role in chromatin organization. This chain is BRCT-containing protein 1 (brc1), found in Schizosaccharomyces pombe (strain 972 / ATCC 24843) (Fission yeast).